The following is a 197-amino-acid chain: U1 small nuclear ribonucleoprotein C (197 aa).

The segment at 4 to 36 adopts a Matrin-type zinc-finger fold; it reads YYCEYCDIYLTHSSPVGRRQHNQGRKHISAKIE. The segment covering 128 to 137 has biased composition (low complexity); that stretch reads FHNNKRINNI. The tract at residues 128–178 is disordered; it reads FHNNKRINNIPKPYNNYTNKPITNSSYKNDKQDYRNNNESNDNMNSNNFSN. The segment covering 142 to 154 has biased composition (polar residues); it reads NNYTNKPITNSSY. Over residues 164–178 the composition is skewed to low complexity; the sequence is NNESNDNMNSNNFSN.

It belongs to the U1 small nuclear ribonucleoprotein C family. As to quaternary structure, U1 snRNP is composed of the 7 core Sm proteins B/B', D1, D2, D3, E, F and G that assemble in a heptameric protein ring on the Sm site of the small nuclear RNA to form the core snRNP, and at least 3 U1 snRNP-specific proteins U1-70K, U1-A and U1-C. U1-C interacts with U1 snRNA and the 5' splice-site region of the pre-mRNA.

It localises to the nucleus. In terms of biological role, component of the spliceosomal U1 snRNP, which is essential for recognition of the pre-mRNA 5' splice-site and the subsequent assembly of the spliceosome. U1-C is directly involved in initial 5' splice-site recognition for both constitutive and regulated alternative splicing. The interaction with the 5' splice-site seems to precede base-pairing between the pre-mRNA and the U1 snRNA. Stimulates commitment or early (E) complex formation by stabilizing the base pairing of the 5' end of the U1 snRNA and the 5' splice-site region. The chain is U1 small nuclear ribonucleoprotein C (SNRPC) from Plasmodium berghei (strain Anka).